The following is an 88-amino-acid chain: Small ribosomal subunit protein uS17 (88 aa).

This sequence belongs to the universal ribosomal protein uS17 family. Part of the 30S ribosomal subunit.

Functionally, one of the primary rRNA binding proteins, it binds specifically to the 5'-end of 16S ribosomal RNA. The chain is Small ribosomal subunit protein uS17 from Prochlorococcus marinus (strain MIT 9215).